A 123-amino-acid chain; its full sequence is Putative iron-sulfur cluster insertion protein ErpA (123 aa).

3 residues coordinate iron-sulfur cluster: C51, C115, and C117.

It belongs to the HesB/IscA family. As to quaternary structure, homodimer. The cofactor is iron-sulfur cluster.

In terms of biological role, required for insertion of 4Fe-4S clusters. The chain is Putative iron-sulfur cluster insertion protein ErpA from Burkholderia cenocepacia (strain HI2424).